A 571-amino-acid chain; its full sequence is Protein E6 homolog (571 aa).

This sequence belongs to the chordopoxvirinae E6 family.

The protein resides in the virion. Late protein which may play a role in the virion morphogenesis and have therefore an indirect role on viral transcription ability. This is Protein E6 homolog from Vertebrata (FPV).